Reading from the N-terminus, the 462-residue chain is Threonine--tRNA ligase, mitochondrial (462 aa).

The N-terminal 45 residues, 1–45 (MKIQLVRWHCSRNALWNRAFYSTRKATKNASSATPATMTSMVSQR), are a transit peptide targeting the mitochondrion.

This sequence belongs to the class-II aminoacyl-tRNA synthetase family.

It localises to the mitochondrion matrix. It catalyses the reaction tRNA(Thr) + L-threonine + ATP = L-threonyl-tRNA(Thr) + AMP + diphosphate + H(+). The chain is Threonine--tRNA ligase, mitochondrial (MST1) from Saccharomyces cerevisiae (strain ATCC 204508 / S288c) (Baker's yeast).